The primary structure comprises 182 residues: UPF0316 protein BCAH820_3389 (182 aa).

A run of 3 helical transmembrane segments spans residues 6 to 26, 32 to 52, and 58 to 78; these read LIFVLQIIYVPILTIRTILLV, SAAAVGLLEGAIYIVSLGIVF, and WMNIVAYVIGFSAGLLLGGYI.

The protein belongs to the UPF0316 family.

It is found in the cell membrane. The protein is UPF0316 protein BCAH820_3389 of Bacillus cereus (strain AH820).